We begin with the raw amino-acid sequence, 429 residues long: Ribosomal RNA small subunit methyltransferase B (429 aa).

S-adenosyl-L-methionine contacts are provided by residues 254-260 (CAAPGGK), D277, D303, and D322. The active-site Nucleophile is C375.

It belongs to the class I-like SAM-binding methyltransferase superfamily. RsmB/NOP family.

The protein localises to the cytoplasm. The enzyme catalyses cytidine(967) in 16S rRNA + S-adenosyl-L-methionine = 5-methylcytidine(967) in 16S rRNA + S-adenosyl-L-homocysteine + H(+). In terms of biological role, specifically methylates the cytosine at position 967 (m5C967) of 16S rRNA. The polypeptide is Ribosomal RNA small subunit methyltransferase B (Erwinia tasmaniensis (strain DSM 17950 / CFBP 7177 / CIP 109463 / NCPPB 4357 / Et1/99)).